Here is a 274-residue protein sequence, read N- to C-terminus: 2,3,4,5-tetrahydropyridine-2,6-dicarboxylate N-succinyltransferase (274 aa).

The substrate site is built by arginine 106 and aspartate 143.

The protein belongs to the transferase hexapeptide repeat family. As to quaternary structure, homotrimer.

The protein resides in the cytoplasm. It carries out the reaction (S)-2,3,4,5-tetrahydrodipicolinate + succinyl-CoA + H2O = (S)-2-succinylamino-6-oxoheptanedioate + CoA. The protein operates within amino-acid biosynthesis; L-lysine biosynthesis via DAP pathway; LL-2,6-diaminopimelate from (S)-tetrahydrodipicolinate (succinylase route): step 1/3. In Rickettsia conorii (strain ATCC VR-613 / Malish 7), this protein is 2,3,4,5-tetrahydropyridine-2,6-dicarboxylate N-succinyltransferase.